The sequence spans 160 residues: 2-C-methyl-D-erythritol 2,4-cyclodiphosphate synthase (160 aa).

Residues aspartate 11 and histidine 13 each contribute to the a divalent metal cation site. 4-CDP-2-C-methyl-D-erythritol 2-phosphate-binding positions include 11–13 (DVH) and 37–38 (HS). Histidine 45 contributes to the a divalent metal cation binding site. Residues 59–61 (DIG) and arginine 145 each bind 4-CDP-2-C-methyl-D-erythritol 2-phosphate.

Belongs to the IspF family. In terms of assembly, homotrimer. The cofactor is a divalent metal cation.

It carries out the reaction 4-CDP-2-C-methyl-D-erythritol 2-phosphate = 2-C-methyl-D-erythritol 2,4-cyclic diphosphate + CMP. The protein operates within isoprenoid biosynthesis; isopentenyl diphosphate biosynthesis via DXP pathway; isopentenyl diphosphate from 1-deoxy-D-xylulose 5-phosphate: step 4/6. Its function is as follows. Involved in the biosynthesis of isopentenyl diphosphate (IPP) and dimethylallyl diphosphate (DMAPP), two major building blocks of isoprenoid compounds. Catalyzes the conversion of 4-diphosphocytidyl-2-C-methyl-D-erythritol 2-phosphate (CDP-ME2P) to 2-C-methyl-D-erythritol 2,4-cyclodiphosphate (ME-CPP) with a corresponding release of cytidine 5-monophosphate (CMP). This chain is 2-C-methyl-D-erythritol 2,4-cyclodiphosphate synthase, found in Neisseria gonorrhoeae (strain ATCC 700825 / FA 1090).